A 121-amino-acid chain; its full sequence is Replication protein A 14 kDa subunit (121 aa).

Residues Lys39 and Lys88 each participate in a glycyl lysine isopeptide (Lys-Gly) (interchain with G-Cter in ubiquitin) cross-link.

It belongs to the replication factor A protein 3 family. In terms of assembly, component of the canonical replication protein A complex (RPA), a heterotrimer composed of RPA1, RPA2 and RPA3. Also a component of the aRPA, the alternative replication protein A complex, a trimeric complex similar to the replication protein A complex/RPA but where RPA1 and RPA3 are associated with RPA4 instead of RPA2. Ubiquitinated by RFWD3 at stalled replication forks in response to DNA damage: ubiquitination by RFWD3 does not lead to degradation by the proteasome and promotes removal of the RPA complex from stalled replication forks, promoting homologous recombination.

The protein localises to the nucleus. Functionally, as part of the heterotrimeric replication protein A complex (RPA/RP-A), binds and stabilizes single-stranded DNA intermediates, that form during DNA replication or upon DNA stress. It prevents their reannealing and in parallel, recruits and activates different proteins and complexes involved in DNA metabolism. Thereby, it plays an essential role both in DNA replication and the cellular response to DNA damage. In the cellular response to DNA damage, the RPA complex controls DNA repair and DNA damage checkpoint activation. Through recruitment of ATRIP activates the ATR kinase a master regulator of the DNA damage response. It is required for the recruitment of the DNA double-strand break repair factors RAD51 and RAD52 to chromatin, in response to DNA damage. Also recruits to sites of DNA damage proteins like XPA and XPG that are involved in nucleotide excision repair and is required for this mechanism of DNA repair. Also plays a role in base excision repair (BER), probably through interaction with UNG. Also recruits SMARCAL1/HARP, which is involved in replication fork restart, to sites of DNA damage. May also play a role in telomere maintenance. RPA3 has its own single-stranded DNA-binding activity and may be responsible for polarity of the binding of the complex to DNA. The sequence is that of Replication protein A 14 kDa subunit (Rpa3) from Mus musculus (Mouse).